The following is an 864-amino-acid chain: Microtubule-associated protein TORTIFOLIA1 (864 aa).

The tract at residues 1–26 (MSTPTTSGSAAKPTRPARSSSLATRS) is disordered. The span at 17 to 26 (ARSSSLATRS) shows a compositional bias: polar residues. 5 HEAT repeats span residues 76–113 (ETLPMFLNCLYDSCSDPKPAVKKECLHLLSYVCSLHCD), 117–154 (AHLTKIIAQIVKRLKDSDSGVRDACRDTIGALSGIYLK), 167–204 (LAVGLFVKPLFEAMGEQNKVVQSGASMCMARMVESAAS), 208–245 (TSFQKLCPRICKLLSNSSFLAKASLLPVVSSLSQVGAI), and 248–285 (QSLESLLESIHDCLGSTDWVTRKAAAETLTALASHSSG). Residues 329–353 (DGASDDSKLSASEQLGSEKNGEKRS) are disordered. Serine 414 carries the phosphoserine modification. The tract at residues 426 to 504 (NDEEESGLDD…QSEGSFTSNR (79 aa)) is disordered. The span at 439 to 448 (MGSSNRLKNT) shows a compositional bias: polar residues. Residues 449 to 459 (QADDKQVKGRF) show a composition bias toward basic and acidic residues. Residues 489-504 (VSNTDNQSEGSFTSNR) are compositionally biased toward polar residues. A coiled-coil region spans residues 508 to 561 (SAIQRQLLQLERQQTNLMNMLQEFIGGSHDSMVTLEGRVRGLERIVEDMARDLS). Residues 615 to 670 (DDWFIPPHAASRNGQAGPRRSPRSEQYENEHMGNGRRGWDNKASGTIRFGEGPSAR) form a disordered region. The segment covering 636 to 654 (PRSEQYENEHMGNGRRGWD) has biased composition (basic and acidic residues).

Interacts with WAV3. Expressed in roots, hypocotyls, stems, flowers, siliques, inflorescences, petioles, cotyledons, and leaves. Particularly present in root tips and shoot meristems.

The protein resides in the cytoplasm. It is found in the cytoskeleton. Plant-specific microtubule-associated protein (MAP) that regulates the orientation of cortical microtubules and the direction of organ growth. Determines microtubule organization by modulating microtubule severing. In Arabidopsis thaliana (Mouse-ear cress), this protein is Microtubule-associated protein TORTIFOLIA1.